The sequence spans 388 residues: Chorismate synthase (388 aa).

2 residues coordinate NADP(+): Arg39 and Arg45. Residues 132–134 (RSS), 251–252 (NA), Gly296, 311–315 (KPIPT), and Arg337 contribute to the FMN site.

It belongs to the chorismate synthase family. Homotetramer. Requires FMNH2 as cofactor.

It carries out the reaction 5-O-(1-carboxyvinyl)-3-phosphoshikimate = chorismate + phosphate. It functions in the pathway metabolic intermediate biosynthesis; chorismate biosynthesis; chorismate from D-erythrose 4-phosphate and phosphoenolpyruvate: step 7/7. Its function is as follows. Catalyzes the anti-1,4-elimination of the C-3 phosphate and the C-6 proR hydrogen from 5-enolpyruvylshikimate-3-phosphate (EPSP) to yield chorismate, which is the branch point compound that serves as the starting substrate for the three terminal pathways of aromatic amino acid biosynthesis. This reaction introduces a second double bond into the aromatic ring system. The sequence is that of Chorismate synthase from Staphylococcus aureus (strain MRSA252).